The primary structure comprises 327 residues: Acetaldehyde dehydrogenase 5 (327 aa).

Residue 15–18 (SGNI) coordinates NAD(+). The active-site Acyl-thioester intermediate is cysteine 133. NAD(+) is bound by residues 164–172 (SAGPGTRAN) and asparagine 297.

The protein belongs to the acetaldehyde dehydrogenase family.

It carries out the reaction acetaldehyde + NAD(+) + CoA = acetyl-CoA + NADH + H(+). This is Acetaldehyde dehydrogenase 5 from Rhodococcus jostii (strain RHA1).